A 354-amino-acid polypeptide reads, in one-letter code: Ornithine carbamoyltransferase, catabolic (354 aa).

Residues 67–70 (STRT), Gln94, Arg118, and 145–148 (HPTQ) contribute to the carbamoyl phosphate site. Residues Asn177, Asp241, and 245-246 (SM) contribute to the L-ornithine site. Carbamoyl phosphate is bound by residues 284–285 (CL) and Arg329.

The protein belongs to the aspartate/ornithine carbamoyltransferase superfamily. OTCase family.

The protein localises to the cytoplasm. It carries out the reaction carbamoyl phosphate + L-ornithine = L-citrulline + phosphate + H(+). Its pathway is amino-acid degradation; L-arginine degradation via ADI pathway; carbamoyl phosphate from L-arginine: step 2/2. Its function is as follows. Reversibly catalyzes the transfer of the carbamoyl group from carbamoyl phosphate (CP) to the N(epsilon) atom of ornithine (ORN) to produce L-citrulline. This chain is Ornithine carbamoyltransferase, catabolic (arcB), found in Lactococcus lactis subsp. cremoris (Streptococcus cremoris).